Here is a 558-residue protein sequence, read N- to C-terminus: INCREASED PETAL GROWTH ANISOTROPY 1-like protein 2 (558 aa).

The segment covering 1–15 (MSRISTTSTTPSRVR) has biased composition (low complexity). Residues 1 to 54 (MSRISTTSTTPSRVRAANSHYSVISKPRAQDDNGLTGGKPKSSGYDVKNDPAKR) are disordered. Residues 104–180 (VMATAAAEDE…EAKISSLSSN (77 aa)) adopt a coiled-coil conformation. Positions 207–285 (KVKKEVAVES…AARAQKSPPV (79 aa)) are disordered. Pro residues-rich tracts occupy residues 221-236 (PPSP…PPLP) and 256-272 (FAPP…PPRP). Residues 392–448 (KADTLQEAAVEYRELKKLEKELSSYSDDPNIHYGVALKKMANLLDKSEQRIRRLVRL) adopt a coiled-coil conformation.

Belongs to the IPGA1 family.

The protein localises to the cytoplasm. It localises to the cytoskeleton. Microtubule-associated protein probably involved in the regulation of microtubule organization. The sequence is that of INCREASED PETAL GROWTH ANISOTROPY 1-like protein 2 from Arabidopsis thaliana (Mouse-ear cress).